The primary structure comprises 583 residues: MEQLDVEDWEYWGDEYLEEEPTYAIRPGTRVVKVERVPMMRGDLRTSGATSSSGPATSYIIRPSDKQPTVSSGGSQNGDSVCAVCGDGIAKLHYGVLACYGCKGFFRRTLTGKYRYACRFSNNCIVDKFQRNSCRYCRFQRCIQAGMDPKAVRPDRDQTGKQKVPRIKKKQIDEELLNHMMRLQGDDWSRKLPVETRILLMQLMSIEDKVVKGDNNMSAQNTAKDPKSISLREMFESKPALDGRRMEIGYEPFRMARTEELGVIAHRRAIAAVDWVDSLTEIADAVDTEDKVALVKSCYSPLTIFNFSARTAQNTKNPDILCLCSHSFVPRRLPPEFNETNHLSNFLIDRTLNELVAPLRKLNLKEEEIVPLKAIIILNPNAKGLSEHARHAISELRDKVQDMLFQIVKELHPIYSASSRFGNLLLLLPTITTLSGLMSENMHFCQALGGRASGDNLLAEMFGDRTFDDQLISSSISPPLFENPAEICLESISPPMSDRRFVRRVDVATQTNDDLLSSGPYLPHSNSCSSMLNAGYSPPMLSTSPFPLLDDNDSAFQNDISLTELNGCEEFFSQLMDQPIIDS.

Residues 43-77 (DLRTSGATSSSGPATSYIIRPSDKQPTVSSGGSQN) form a disordered region. Residues 46-58 (TSGATSSSGPATS) are compositionally biased toward low complexity. A compositionally biased stretch (polar residues) spans 66–77 (KQPTVSSGGSQN). Positions 79–154 (DSVCAVCGDG…AGMDPKAVRP (76 aa)) form a DNA-binding region, nuclear receptor. NR C4-type zinc fingers lie at residues 82–102 (CAVCGDGIAKLHYGVLACYGC) and 118–142 (CRFSNNCIVDKFQRNSCRYCRFQRC). The region spanning 195-464 (ETRILLMQLM…DNLLAEMFGD (270 aa)) is the NR LBD domain.

Belongs to the nuclear hormone receptor family.

It localises to the nucleus. In terms of biological role, orphan nuclear receptor. This Caenorhabditis elegans protein is Nuclear hormone receptor family member nhr-31 (nhr-31).